We begin with the raw amino-acid sequence, 754 residues long: 1,4-alpha-glucan branching enzyme GlgB (754 aa).

Asp-431 acts as the Nucleophile in catalysis. The active-site Proton donor is Glu-484.

It belongs to the glycosyl hydrolase 13 family. GlgB subfamily. Monomer.

The catalysed reaction is Transfers a segment of a (1-&gt;4)-alpha-D-glucan chain to a primary hydroxy group in a similar glucan chain.. It functions in the pathway glycan biosynthesis; glycogen biosynthesis. Catalyzes the formation of the alpha-1,6-glucosidic linkages in glycogen by scission of a 1,4-alpha-linked oligosaccharide from growing alpha-1,4-glucan chains and the subsequent attachment of the oligosaccharide to the alpha-1,6 position. The polypeptide is 1,4-alpha-glucan branching enzyme GlgB (Prochlorococcus marinus (strain MIT 9301)).